Here is an 865-residue protein sequence, read N- to C-terminus: Protein translocase subunit SecA (865 aa).

Residues glutamine 93, 111-115 (GEGKT), and aspartate 501 each bind ATP. Residues cysteine 841, cysteine 843, cysteine 852, and cysteine 853 each contribute to the Zn(2+) site.

The protein belongs to the SecA family. Monomer and homodimer. Part of the essential Sec protein translocation apparatus which comprises SecA, SecYEG and auxiliary proteins SecDF-YajC and YidC. Zn(2+) is required as a cofactor.

It is found in the cell inner membrane. It localises to the cytoplasm. It catalyses the reaction ATP + H2O + cellular proteinSide 1 = ADP + phosphate + cellular proteinSide 2.. Its function is as follows. Part of the Sec protein translocase complex. Interacts with the SecYEG preprotein conducting channel. Has a central role in coupling the hydrolysis of ATP to the transfer of proteins into and across the cell membrane, serving as an ATP-driven molecular motor driving the stepwise translocation of polypeptide chains across the membrane. The sequence is that of Protein translocase subunit SecA from Helicobacter pylori (strain J99 / ATCC 700824) (Campylobacter pylori J99).